The primary structure comprises 337 residues: 4-hydroxy-2-oxovalerate aldolase (337 aa).

One can recognise a Pyruvate carboxyltransferase domain in the interval 6–256 (IRIMDTTLRD…ETGIDLFQIM (251 aa)). Residue 14 to 15 (RD) coordinates substrate. A Mn(2+)-binding site is contributed by Asp-15. His-18 acts as the Proton acceptor in catalysis. Residues Ser-168 and His-195 each contribute to the substrate site. Residues His-195 and His-197 each coordinate Mn(2+). Tyr-286 contributes to the substrate binding site.

It belongs to the 4-hydroxy-2-oxovalerate aldolase family.

The catalysed reaction is (S)-4-hydroxy-2-oxopentanoate = acetaldehyde + pyruvate. The sequence is that of 4-hydroxy-2-oxovalerate aldolase (nahM) from Geobacillus genomosp. 3.